We begin with the raw amino-acid sequence, 510 residues long: DAP3-binding cell death enhancer 1 (510 aa).

The N-terminal 23 residues, 1 to 23 (MWRLTGILGRALPRLLGPGFRGI), are a transit peptide targeting the mitochondrion. 2 disordered regions span residues 19 to 61 (GFRG…SRDP) and 142 to 185 (VLPR…SGLL). A propeptide spans 24–101 (TPKPTSSDGS…AVLALHLARQ (78 aa)) (extended MTS). Low complexity predominate over residues 35 to 45 (TTSPTLPLTRL). 2 stretches are compositionally biased toward basic and acidic residues: residues 46-61 (SFDR…SRDP) and 155-167 (GLRE…EDHP). The span at 169–181 (APSQCLPSDSSLR) shows a compositional bias: polar residues. TPR repeat units follow at residues 213–245 (AHPP…QLSV), 246–278 (AITF…RGYS), 279–313 (KAQY…VQGH), 314–351 (SLAQ…DSGL), 352–385 (TEAQ…SNGD), 386–423 (SQSR…GNEP), and 471–499 (ASST…TIPS). Positions 307–326 (LAAVQGHSLAQYRYARCLLQ) match the SIFI-degron motif.

Belongs to the DELE1 family. Interacts with DAP3. In terms of assembly, interacts (via TPR repeats) with EIF2AK1/HRI; activating the protein kinase activity of EIF2AK1/HRI, thereby promoting the integrated stress response (ISR). As to quaternary structure, homooctamer; oligomerization is required to activate EIF2AK1/HRI. Interacts (via TPR repeats) with EIF2AK1/HRI; activating the protein kinase activity of EIF2AK1/HRI, thereby promoting the integrated stress response (ISR). Post-translationally, unstable protein in absence of stress: imported in the mitochondrial matrix following processing by the mitochondrial-processing peptidase (MPP), where it is degraded by LONP1. Stabilized in response to iron deficiency: iron deficiency impairs mitochondrial import, promoting localization at the mitochondrial surface and stabilization. Cleaved by OMA1 in response to mitochondrial stress, generating the DAP3-binding cell death enhancer 1 short form (DELE1(S) or S-DELE1) that accumulates in the cytosol and activates the protein kinase activity of EIF2AK1/HRI. Protein cleavage by OMA1 can take place at different positions, and apparently does not require a specific sequence motif. In terms of processing, ubiquitinated and degraded by the SIFI complex once the mitochondrial stress has been resolved, thereby providing stress response silencing. Within the SIFI complex, UBR4 initiates ubiquitin chain that are further elongated or branched by KCMF1.

It is found in the mitochondrion. The protein resides in the mitochondrion outer membrane. Its subcellular location is the mitochondrion inner membrane. The protein localises to the cytoplasm. It localises to the cytosol. Protein kinase activator that acts as a key activator of the integrated stress response (ISR) following various stresses, such as iron deficiency, mitochondrial stress or mitochondrial DNA breaks. Detects impaired protein import and processing in mitochondria, activating the ISR. May also required for the induction of death receptor-mediated apoptosis through the regulation of caspase activation. In terms of biological role, protein kinase activator that activates the ISR in response to iron deficiency: iron deficiency impairs mitochondrial import, promoting DELE1 localization at the mitochondrial surface, where it binds and activates EIF2AK1/HRI to trigger the ISR. Its function is as follows. Protein kinase activator generated by protein cleavage in response to mitochondrial stress, which accumulates in the cytosol and specifically binds to and activates the protein kinase activity of EIF2AK1/HRI. It thereby activates the integrated stress response (ISR): EIF2AK1/HRI activation promotes eIF-2-alpha (EIF2S1) phosphorylation, leading to a decrease in global protein synthesis and the induction of selected genes, including the transcription factor ATF4, the master transcriptional regulator of the ISR. Also acts as an activator of PRKN-independent mitophagy: activates the protein kinase activity of EIF2AK1/HRI in response to mitochondrial damage, promoting eIF-2-alpha (EIF2S1) phosphorylation, leading to mitochondrial localization of EIF2S1 followed by induction of mitophagy. In Mus musculus (Mouse), this protein is DAP3-binding cell death enhancer 1.